The primary structure comprises 510 residues: ATP synthase subunit alpha (510 aa).

Position 169–176 (169–176 (GDRQTGKT)) interacts with ATP.

The protein belongs to the ATPase alpha/beta chains family. F-type ATPases have 2 components, CF(1) - the catalytic core - and CF(0) - the membrane proton channel. CF(1) has five subunits: alpha(3), beta(3), gamma(1), delta(1), epsilon(1). CF(0) has three main subunits: a(1), b(2) and c(9-12). The alpha and beta chains form an alternating ring which encloses part of the gamma chain. CF(1) is attached to CF(0) by a central stalk formed by the gamma and epsilon chains, while a peripheral stalk is formed by the delta and b chains.

Its subcellular location is the cell inner membrane. It catalyses the reaction ATP + H2O + 4 H(+)(in) = ADP + phosphate + 5 H(+)(out). Produces ATP from ADP in the presence of a proton gradient across the membrane. The alpha chain is a regulatory subunit. This is ATP synthase subunit alpha from Rickettsia rickettsii (strain Iowa).